The following is a 264-amino-acid chain: S-adenosylmethionine decarboxylase proenzyme (264 aa).

Ser112 acts as the Schiff-base intermediate with substrate; via pyruvic acid in catalysis. Residue Ser112 is modified to Pyruvic acid (Ser); by autocatalysis. His117 acts as the Proton acceptor; for processing activity in catalysis. Catalysis depends on Cys140, which acts as the Proton donor; for catalytic activity.

The protein belongs to the prokaryotic AdoMetDC family. Type 2 subfamily. In terms of assembly, heterooctamer of four alpha and four beta chains arranged as a tetramer of alpha/beta heterodimers. The cofactor is pyruvate. Post-translationally, is synthesized initially as an inactive proenzyme. Formation of the active enzyme involves a self-maturation process in which the active site pyruvoyl group is generated from an internal serine residue via an autocatalytic post-translational modification. Two non-identical subunits are generated from the proenzyme in this reaction, and the pyruvate is formed at the N-terminus of the alpha chain, which is derived from the carboxyl end of the proenzyme. The post-translation cleavage follows an unusual pathway, termed non-hydrolytic serinolysis, in which the side chain hydroxyl group of the serine supplies its oxygen atom to form the C-terminus of the beta chain, while the remainder of the serine residue undergoes an oxidative deamination to produce ammonia and the pyruvoyl group blocking the N-terminus of the alpha chain.

The enzyme catalyses S-adenosyl-L-methionine + H(+) = S-adenosyl 3-(methylsulfanyl)propylamine + CO2. It functions in the pathway amine and polyamine biosynthesis; S-adenosylmethioninamine biosynthesis; S-adenosylmethioninamine from S-adenosyl-L-methionine: step 1/1. In terms of biological role, catalyzes the decarboxylation of S-adenosylmethionine to S-adenosylmethioninamine (dcAdoMet), the propylamine donor required for the synthesis of the polyamines spermine and spermidine from the diamine putrescine. The chain is S-adenosylmethionine decarboxylase proenzyme from Yersinia pseudotuberculosis serotype O:1b (strain IP 31758).